Reading from the N-terminus, the 68-residue chain is Small ribosomal subunit protein bS21 (68 aa).

This sequence belongs to the bacterial ribosomal protein bS21 family.

The chain is Small ribosomal subunit protein bS21 from Dinoroseobacter shibae (strain DSM 16493 / NCIMB 14021 / DFL 12).